Here is a 395-residue protein sequence, read N- to C-terminus: MHC class I-like protein MILL1 (395 aa).

The signal sequence occupies residues 1 to 32 (MLLSRNLRALAAIHLWIVYLLLEDLLGTCAEG). The interval 57–148 (AVAEPHTLRY…ITAQNGQNTD (92 aa)) is alpha-1. Residues asparagine 98, asparagine 163, and asparagine 199 are each glycosylated (N-linked (GlcNAc...) asparagine). The tract at residues 149–240 (LHILQATFGC…SLRNGLLNTG (92 aa)) is alpha-2. Disulfide bonds link cysteine 158/cysteine 221 and cysteine 260/cysteine 317. The alpha-3 stretch occupies residues 241–337 (FPKVIVTFRN…EPAATEAPVY (97 aa)). An Ig-like C1-type domain is found at 242–333 (PKVIVTFRNY…HNINEPAATE (92 aa)). Residues 332 to 352 (TEAPVYGARREQPPTSGVGSR) form a disordered region. The connecting peptide stretch occupies residues 338-368 (GARREQPPTSGVGSRVGKSLWSAMTTALVVI). A lipid anchor (GPI-anchor amidated serine) is attached at serine 369. The propeptide at 370–395 (WTLSQKLMGPLLWFCSGGFCSFLQCW) is removed in mature form.

Belongs to the MHC class I family. In terms of assembly, heterodimer with B2M. Post-translationally, N-glycosylated. As to expression, expressed in stomach, intestine, uterus, skeletal muscle and heart.

The protein resides in the cell membrane. This is MHC class I-like protein MILL1 from Mus musculus (Mouse).